Reading from the N-terminus, the 273-residue chain is ATP synthase subunit delta (273 aa).

It belongs to the ATPase delta chain family. In terms of assembly, F-type ATPases have 2 components, F(1) - the catalytic core - and F(0) - the membrane proton channel. F(1) has five subunits: alpha(3), beta(3), gamma(1), delta(1), epsilon(1). F(0) has three main subunits: a(1), b(2) and c(10-14). The alpha and beta chains form an alternating ring which encloses part of the gamma chain. F(1) is attached to F(0) by a central stalk formed by the gamma and epsilon chains, while a peripheral stalk is formed by the delta and b chains.

Its subcellular location is the cell membrane. Its function is as follows. F(1)F(0) ATP synthase produces ATP from ADP in the presence of a proton or sodium gradient. F-type ATPases consist of two structural domains, F(1) containing the extramembraneous catalytic core and F(0) containing the membrane proton channel, linked together by a central stalk and a peripheral stalk. During catalysis, ATP synthesis in the catalytic domain of F(1) is coupled via a rotary mechanism of the central stalk subunits to proton translocation. This protein is part of the stalk that links CF(0) to CF(1). It either transmits conformational changes from CF(0) to CF(1) or is implicated in proton conduction. The sequence is that of ATP synthase subunit delta from Streptomyces avermitilis (strain ATCC 31267 / DSM 46492 / JCM 5070 / NBRC 14893 / NCIMB 12804 / NRRL 8165 / MA-4680).